The sequence spans 334 residues: Gap junction alpha-2 protein (334 aa).

At 1–12 the chain is on the cytoplasmic side; that stretch reads MAGWELLKLLLD. Residues 13 to 35 form a helical membrane-spanning segment; that stretch reads DVQEHSTLIGKVWLTVLFIFRIF. The Extracellular portion of the chain corresponds to 36–75; the sequence is ILSVAGESVWTDEQSDFICNTQQPGCTNVCYDQAFPISHV. Residues 76–98 traverse the membrane as a helical segment; sequence RYWVLQFLFVSTPTLIYLGHMVY. Residues 99–153 lie on the Cytoplasmic side of the membrane; that stretch reads LSKKEEKERQKENESRILVANEAQTEVHSSATKKIRIQGPLMCTYTTSVVFKSIF. Residues 154-176 traverse the membrane as a helical segment; sequence EAGFLLGQWYIYGFVMSPIFVCE. At 177 to 207 the chain is on the extracellular side; it reads RIPCKHKVECFVSRPMEKTIFIIFMLVVSLI. A helical transmembrane segment spans residues 208–230; the sequence is SLLLNLMELIHLSFKCFQHGIKE. At 231 to 334 the chain is on the cytoplasmic side; it reads GATCSPTGIP…HQTSSKQQYV (104 aa).

It belongs to the connexin family. Alpha-type (group II) subfamily. A connexon is composed of a hexamer of connexins. As to expression, resides primarily in the ovary, oocytes and early embryos.

The protein resides in the cell membrane. It localises to the cell junction. It is found in the gap junction. In terms of biological role, one gap junction consists of a cluster of closely packed pairs of transmembrane channels, the connexons, through which materials of low MW diffuse from one cell to a neighboring cell. This Xenopus laevis (African clawed frog) protein is Gap junction alpha-2 protein (gja2).